The sequence spans 735 residues: Ion-translocating oxidoreductase complex subunit C (735 aa).

4Fe-4S ferredoxin-type domains are found at residues 368–397 (MGAP…QQLY) and 407–436 (KATA…VQYF). Residues cysteine 377, cysteine 380, cysteine 383, cysteine 387, cysteine 416, cysteine 419, cysteine 422, and cysteine 426 each coordinate [4Fe-4S] cluster. Positions 534–716 (QARAKQAAHP…ADPRKAAVAA (183 aa)) are disordered.

It belongs to the 4Fe4S bacterial-type ferredoxin family. RnfC subfamily. The complex is composed of six subunits: RsxA, RsxB, RsxC, RsxD, RsxE and RsxG. It depends on [4Fe-4S] cluster as a cofactor.

The protein resides in the cell inner membrane. In terms of biological role, part of a membrane-bound complex that couples electron transfer with translocation of ions across the membrane. Required to maintain the reduced state of SoxR. The polypeptide is Ion-translocating oxidoreductase complex subunit C (Salmonella agona (strain SL483)).